The primary structure comprises 124 residues: CD59 glycoprotein (124 aa).

The signal sequence occupies residues 1–24; sequence MTSRGVHLLLRLLFLLAVFYSSDS. The UPAR/Ly6 domain occupies 25 to 101; it reads SLMCYHCLLP…DLCNGPEDDG (77 aa). Intrachain disulfides connect cysteine 28/cysteine 51, cysteine 31/cysteine 38, cysteine 44/cysteine 64, cysteine 70/cysteine 88, and cysteine 89/cysteine 94. Asparagine 37 carries N-linked (GlcNAc...) asparagine glycosylation. The GPI-anchor amidated glycine moiety is linked to residue glycine 101. Positions 102-124 are cleaved as a propeptide — removed in mature form; it reads TALTGRTVLLVAPLLAAARNLCL.

Interacts with T-cell surface antigen CD2. In terms of processing, N- and O-glycosylated.

Its subcellular location is the cell membrane. The protein resides in the secreted. Its function is as follows. Potent inhibitor of the complement membrane attack complex (MAC) action, which protects self-cells from damage during complement activation. Acts by binding to the beta-haipins of C8 (C8A and C8B) components of the assembling MAC, forming an intermolecular beta-sheet that prevents incorporation of the multiple copies of C9 required for complete formation of the osmolytic pore. The chain is CD59 glycoprotein from Oryctolagus cuniculus (Rabbit).